The chain runs to 207 residues: Vexin (207 aa).

The tract at residues 56–100 (ELLPHRGDRRDPGDRRRFGRLQTARPPTAHPAKASARPVGISEPK) is disordered. Over residues 58 to 71 (LPHRGDRRDPGDRR) the composition is skewed to basic and acidic residues.

The protein belongs to the vexin family.

The protein localises to the cell membrane. The protein resides in the nucleus. Functionally, required for neurogenesis in the neural plate and retina. Strongly cooperates with neural bHLH factors to promote neurogenesis. The protein is Vexin of Homo sapiens (Human).